Here is a 258-residue protein sequence, read N- to C-terminus: Acyl-[acyl-carrier-protein]--UDP-N-acetylglucosamine O-acyltransferase (258 aa).

The protein belongs to the transferase hexapeptide repeat family. LpxA subfamily. As to quaternary structure, homotrimer.

Its subcellular location is the cytoplasm. It catalyses the reaction a (3R)-hydroxyacyl-[ACP] + UDP-N-acetyl-alpha-D-glucosamine = a UDP-3-O-[(3R)-3-hydroxyacyl]-N-acetyl-alpha-D-glucosamine + holo-[ACP]. The protein operates within glycolipid biosynthesis; lipid IV(A) biosynthesis; lipid IV(A) from (3R)-3-hydroxytetradecanoyl-[acyl-carrier-protein] and UDP-N-acetyl-alpha-D-glucosamine: step 1/6. In terms of biological role, involved in the biosynthesis of lipid A, a phosphorylated glycolipid that anchors the lipopolysaccharide to the outer membrane of the cell. This is Acyl-[acyl-carrier-protein]--UDP-N-acetylglucosamine O-acyltransferase from Stutzerimonas stutzeri (strain A1501) (Pseudomonas stutzeri).